A 192-amino-acid polypeptide reads, in one-letter code: uncharacterized protein (192 aa).

Residues 29-160 (HRQAAVLIPI…PLDIYRRGDS (132 aa)) enclose the Nudix hydrolase domain. The short motif at 67–89 (GAVDDTDASVIAAALREAEEEVA) is the Nudix box element. Positions 83 and 87 each coordinate Mg(2+).

Belongs to the Nudix hydrolase family. PCD1 subfamily. Requires Mn(2+) as cofactor. Mg(2+) is required as a cofactor.

Functionally, probably mediates the hydrolysis of some nucleoside diphosphate derivatives. This is an uncharacterized protein from Shigella flexneri.